Here is a 202-residue protein sequence, read N- to C-terminus: MQIPTLIDSMANKLHKKPPPLLKLTVIASDAEFHPPPLLGISYEELGSKLVNFATTRNVAMEFRIISSSYSDGLSSLIEQLRIDPFVFNEALVVNCHMMLHYIPDEILTSNLRSVFLKELRDLNPTIVTLIDEDSDFTSTNFISRLRSLYNYMWIPYDTAEMFLTRGSEQRQWYEADISWKIDNVVAKEGAERVERLEPKSR.

The segment at 1 to 26 is VHIID; it reads MQIPTLIDSMANKLHKKPPPLLKLTV. The region spanning 1-202 is the GRAS domain; it reads MQIPTLIDSM…RVERLEPKSR (202 aa). Positions 45-82 are leucine repeat II (LRII); the sequence is ELGSKLVNFATTRNVAMEFRIISSSYSDGLSSLIEQLR. Residues 92 to 184 are PFYRE; that stretch reads LVVNCHMMLH…EADISWKIDN (93 aa). Residues 187–202 are SAW; the sequence is AKEGAERVERLEPKSR.

The protein belongs to the GRAS family. Expressed in seedlings, leaves and flowers.

It localises to the nucleus. Its function is as follows. Probable transcription factor involved in plant development. The chain is Putative scarecrow-like protein 16 (SCL16) from Arabidopsis thaliana (Mouse-ear cress).